The primary structure comprises 680 residues: Tumor protein 63 (680 aa).

The transcription activation stretch occupies residues 1 to 107 (MNFETSRCAT…MQDSDLSDPM (107 aa)). Residues 123-157 (QIQNGSSSTSPYNTDHAQNSVTAPSPYAQPSSTFD) show a composition bias toward polar residues. Positions 123–171 (QIQNGSSSTSPYNTDHAQNSVTAPSPYAQPSSTFDALSPSPAIPSNTDY) are disordered. A DNA-binding region spans residues 170 to 362 (DYPGPHSFDV…KADEDSIRKQ (193 aa)). Residues C244, H247, C308, and C312 each coordinate Zn(2+). A compositionally biased stretch (basic and acidic residues) spans 351–360 (DRKADEDSIR). 2 disordered regions span residues 351–393 (DRKA…IKKR) and 436–472 (RQQQ…MNSM). An interaction with HIPK2 region spans residues 352 to 388 (RKADEDSIRKQQVSDSAKNGDGTKRPFRQNTHGIQMT). A compositionally biased stretch (polar residues) spans 379-389 (RQNTHGIQMTS). An oligomerization region spans residues 394–443 (RSPDDELLYLPVRGRETYEMLLKIKESLELMQYLPQHTIETYRQQQQQQH). Low complexity predominate over residues 437–463 (QQQQQQHQHLLQKQTSMQSQSSYGNSS). In terms of domain architecture, SAM spans 541–607 (PPYPTDCSIV…WKGILDHRQL (67 aa)). A transactivation inhibition region spans residues 610–680 (FSSPPHLLRT…KQQRIKEEGE (71 aa)). A Glycyl lysine isopeptide (Lys-Gly) (interchain with G-Cter in SUMO) cross-link involves residue K676.

Belongs to the p53 family. As to quaternary structure, binds DNA as a homotetramer. Isoform composition of the tetramer may determine transactivation activity. Interacts with HIPK2. Interacts with SSRP1, leading to stimulate coactivator activity. Interacts with PDS5A. Interacts (via activation domain) with NOC2L. Interacts with WWP1. Requires Zn(2+) as cofactor. Post-translationally, may be sumoylated. Ubiquitinated. Polyubiquitination involves WWP1 and leads to proteasomal degradation of this protein. In terms of tissue distribution, widely expressed, notably in thymus, prostate, placenta and skeletal muscle, although the precise isoform varies according to tissue type. Progenitor cell layers of skin, breast and prostate express high levels of DeltaN-type isoforms.

The protein localises to the nucleus. In terms of biological role, acts as a sequence specific DNA binding transcriptional activator or repressor. The isoforms contain a varying set of transactivation and auto-regulating transactivation inhibiting domains thus showing an isoform specific activity. May be required in conjunction with TP73/p73 for initiation of p53/TP53 dependent apoptosis in response to genotoxic insults and the presence of activated oncogenes. Involved in Notch signaling by probably inducing JAG1 and JAG2. Activates transcription of the p21 promoter. Activates RIPK4 transcription. Plays a role in the regulation of epithelial morphogenesis. The ratio of DeltaN-type and TA*-type isoforms may govern the maintenance of epithelial stem cell compartments and regulate the initiation of epithelial stratification from the undifferentiated embryonal ectoderm. Required for limb formation from the apical ectodermal ridge. The protein is Tumor protein 63 (Tp63) of Mus musculus (Mouse).